We begin with the raw amino-acid sequence, 184 residues long: Photosystem I assembly protein Ycf4 (184 aa).

Helical transmembrane passes span 22–42 (FCWA…GTSS) and 57–77 (ILFF…LFIS).

It belongs to the Ycf4 family.

Its subcellular location is the plastid. It is found in the chloroplast thylakoid membrane. Functionally, seems to be required for the assembly of the photosystem I complex. In Panax ginseng (Korean ginseng), this protein is Photosystem I assembly protein Ycf4.